A 484-amino-acid polypeptide reads, in one-letter code: UDP-N-acetylmuramate--L-alanine ligase (484 aa).

Residue 123 to 129 (GTHGKTT) participates in ATP binding.

It belongs to the MurCDEF family.

The protein localises to the cytoplasm. The enzyme catalyses UDP-N-acetyl-alpha-D-muramate + L-alanine + ATP = UDP-N-acetyl-alpha-D-muramoyl-L-alanine + ADP + phosphate + H(+). The protein operates within cell wall biogenesis; peptidoglycan biosynthesis. Cell wall formation. The chain is UDP-N-acetylmuramate--L-alanine ligase from Pseudomonas fluorescens (strain ATCC BAA-477 / NRRL B-23932 / Pf-5).